Here is a 56-residue protein sequence, read N- to C-terminus: Large ribosomal subunit protein bL32 (56 aa).

Over residues 1–16 (MAVQKSKKSRSRRGMR) the composition is skewed to basic residues. The interval 1–38 (MAVQKSKKSRSRRGMRRSHDAVTPENLSVDPVSGETHR) is disordered.

Belongs to the bacterial ribosomal protein bL32 family.

This chain is Large ribosomal subunit protein bL32, found in Colwellia psychrerythraea (strain 34H / ATCC BAA-681) (Vibrio psychroerythus).